Consider the following 886-residue polypeptide: DNA repair and recombination protein RAD54B (886 aa).

Residues 1–12 (MRRSAAPSQVQG) show a composition bias toward polar residues. Residues 1-95 (MRRSAAPSQV…ASKEITESKA (95 aa)) form a disordered region. Residue serine 14 is modified to Phosphoserine. Over residues 47-62 (AEQSQNDPGVCSSNPC) the composition is skewed to polar residues. Composition is skewed to basic and acidic residues over residues 67–76 (IPREVGDGTR) and 86–95 (ASKEITESKA). Residues 291–458 (GMRAVGKCGA…FALVDFVNPG (168 aa)) enclose the Helicase ATP-binding domain. 304–311 (DEMGLGKT) lines the ATP pocket. The DEGH box motif lies at 409 to 412 (DEGH). The 162-residue stretch at 627–788 (KLLAVIHELR…HIQFSVEELK (162 aa)) folds into the Helicase C-terminal domain.

The protein belongs to the SNF2/RAD54 helicase family. In terms of assembly, interacts with RAD51 through the NH2-terminal domain.

The protein localises to the nucleus. Its function is as follows. Involved in DNA repair and mitotic recombination. May play an active role in recombination processes in concert with other members of the RAD52 epistasis group. In Mus musculus (Mouse), this protein is DNA repair and recombination protein RAD54B (Rad54b).